The primary structure comprises 325 residues: GMP reductase (325 aa).

The active-site Thioimidate intermediate is C173. NADP(+) is bound at residue 202–225 (IIADGGIRDHGDIAKSVRFGASMV).

This sequence belongs to the IMPDH/GMPR family. GuaC type 2 subfamily.

The catalysed reaction is IMP + NH4(+) + NADP(+) = GMP + NADPH + 2 H(+). Catalyzes the irreversible NADPH-dependent deamination of GMP to IMP. It functions in the conversion of nucleobase, nucleoside and nucleotide derivatives of G to A nucleotides, and in maintaining the intracellular balance of A and G nucleotides. The protein is GMP reductase of Variovorax paradoxus (strain S110).